The following is an 867-amino-acid chain: Cadherin-related family member 1 (867 aa).

A signal peptide spans 1-21 (MGRGPPAVLAPWMLFLSLAQA). Topologically, residues 22–701 (NFAPHFFDNG…LMQTKDNPMK (680 aa)) are extracellular. Cadherin domains lie at 36 to 135 (NGNM…APRF), 136 to 247 (IQEP…GPVF), 248 to 354 (VGTP…PPTF), 360 to 473 (PQNR…VPKF), 474 to 577 (TSHY…YPQF), and 574 to 689 (YPQF…SPMA). 2 N-linked (GlcNAc...) asparagine glycosylation sites follow: Asn58 and Asn89. N-linked (GlcNAc...) asparagine glycans are attached at residues Asn288 and Asn297. A helical membrane pass occupies residues 702 to 722 (AVGVLAGIMAIIVAITVLIST). Residues 723–867 (ATFWRNKKSN…KKNLHSKAYF (145 aa)) lie on the Cytoplasmic side of the membrane. A disordered region spans residues 767-843 (KFVLREAPPN…VAKRKAVGSP (77 aa)). Residues 777-786 (ENCNNNSRGS) are compositionally biased toward polar residues. Positions 790-802 (PQAPAPPPPPSPA) are enriched in pro residues.

Interacts with PROM1. In terms of processing, undergoes proteolytic cleavage; produces a soluble 95 kDa N-terminal fragment and a 25 kDa cell-associated C-terminal fragment. In terms of tissue distribution, expressed in photoreceptor cells of the outer nuclear layer of the retina.

It localises to the cell membrane. Its function is as follows. Potential calcium-dependent cell-adhesion protein. May be required for the structural integrity of the outer segment (OS) of photoreceptor cells. In Bos taurus (Bovine), this protein is Cadherin-related family member 1 (CDHR1).